The primary structure comprises 475 residues: UDP-glycosyltransferase 101 (475 aa).

Catalysis depends on histidine 15, which acts as the Proton acceptor. Histidine 15 lines the an anthocyanidin pocket. Residue aspartate 117 is the Charge relay of the active site. Alanine 345, glutamine 347, histidine 362, tryptophan 365, asparagine 366, serine 367, and glutamate 370 together coordinate UDP-alpha-D-glucose. Glycine 385 lines the an anthocyanidin pocket. UDP-alpha-D-glucose-binding residues include glutamate 386 and glutamine 387.

The protein belongs to the UDP-glycosyltransferase family.

The enzyme catalyses (20S)-protopanaxadiol + UDP-alpha-D-glucose = (20S)-ginsenoside C-K + UDP + H(+). The catalysed reaction is (20S)-ginsenoside Rg3 + UDP-alpha-D-glucose = (20S)-ginsenoside Rd + UDP + H(+). It catalyses the reaction (20S)-protopanaxatriol + UDP-alpha-D-glucose = (20S)-ginsenoside F1 + UDP + H(+). It carries out the reaction (20S)-ginsenoside F1 + UDP-alpha-D-glucose = (20S)-ginsenoside Rg1 + UDP + H(+). The protein operates within secondary metabolite biosynthesis; terpenoid biosynthesis. Its function is as follows. Component of the dammarane-type triterpene saponins (e.g. ginsenosides or panaxosides) biosynthetic pathway. Glycosyltransferase that catalyzes the biosynthesis of ginsenoside F1 from protopanaxatriol (PPT) and the conversion of ginsenoside F1 to ginsenoside Rg1. Triggers C20-OH glycosylation of ginsenoside Rg3 to produce ginsenoside Rd. Mediates the conversion of protopanaxadiol (PPD) to the ginsenoside compound K. The protein is UDP-glycosyltransferase 101 of Panax ginseng (Korean ginseng).